A 244-amino-acid polypeptide reads, in one-letter code: Proteasome subunit alpha (244 aa).

It belongs to the peptidase T1A family. The 20S proteasome core is composed of 14 alpha and 14 beta subunits that assemble into four stacked heptameric rings, resulting in a barrel-shaped structure. The two inner rings, each composed of seven catalytic beta subunits, are sandwiched by two outer rings, each composed of seven alpha subunits. The catalytic chamber with the active sites is on the inside of the barrel. Has a gated structure, the ends of the cylinder being occluded by the N-termini of the alpha-subunits. Is capped by the proteasome-associated ATPase, ARC.

It is found in the cytoplasm. It participates in protein degradation; proteasomal Pup-dependent pathway. Its activity is regulated as follows. The formation of the proteasomal ATPase ARC-20S proteasome complex, likely via the docking of the C-termini of ARC into the intersubunit pockets in the alpha-rings, may trigger opening of the gate for substrate entry. Interconversion between the open-gate and close-gate conformations leads to a dynamic regulation of the 20S proteasome proteolysis activity. Functionally, component of the proteasome core, a large protease complex with broad specificity involved in protein degradation. The protein is Proteasome subunit alpha of Xylanimonas cellulosilytica (strain DSM 15894 / JCM 12276 / CECT 5975 / KCTC 9989 / LMG 20990 / NBRC 107835 / XIL07).